We begin with the raw amino-acid sequence, 833 residues long: EF-hand domain-containing family member B (833 aa).

EF-hand domains follow at residues 561 to 596 (QKFD…ANLS) and 597 to 632 (LDDK…KDKM). Residues Asp-574, Asp-578, Met-580, Glu-585, Asp-610, Asp-612, Asp-614, and Glu-621 each contribute to the Ca(2+) site.

As to quaternary structure, microtubule inner protein component of sperm flagellar doublet microtubules. Interacts with STIM1 and ORAI1; the interactions take place upon Ca(2+)-store depletion and dissociate through a Ca(2+)-dependent mechanism. Interaction with STIM1 inhibits STIM1 interaction with SARAF. As to expression, expressed in airway epithelial cells.

It is found in the cytoplasm. Its subcellular location is the cytoskeleton. The protein localises to the cilium axoneme. It localises to the flagellum axoneme. Microtubule inner protein (MIP) part of the dynein-decorated doublet microtubules (DMTs) in cilia axoneme, which is required for motile cilia beating. Cytosolic sensor for calcium, modulates the interaction of STIM1 and ORAI1 upon store depletion and the activation of store-operated Ca(2+) entry (SOCE) and NFAT translocation from cytosol to nucleus. The sequence is that of EF-hand domain-containing family member B from Homo sapiens (Human).